The chain runs to 89 residues: MALSATEKSVIVKEYQVKEGDTGSPEVQVALLTANINKLQDHFQANKHDHHSRRGLIRMVNQRRKLLDYLKGKDTQRYVDLIQKLGLRR.

This sequence belongs to the universal ribosomal protein uS15 family. Part of the 30S ribosomal subunit. Forms a bridge to the 50S subunit in the 70S ribosome, contacting the 23S rRNA.

Functionally, one of the primary rRNA binding proteins, it binds directly to 16S rRNA where it helps nucleate assembly of the platform of the 30S subunit by binding and bridging several RNA helices of the 16S rRNA. Its function is as follows. Forms an intersubunit bridge (bridge B4) with the 23S rRNA of the 50S subunit in the ribosome. This chain is Small ribosomal subunit protein uS15, found in Hahella chejuensis (strain KCTC 2396).